Reading from the N-terminus, the 101-residue chain is Large ribosomal subunit protein bL28 (101 aa).

It belongs to the bacterial ribosomal protein bL28 family.

In Methylorubrum extorquens (strain CM4 / NCIMB 13688) (Methylobacterium extorquens), this protein is Large ribosomal subunit protein bL28.